Reading from the N-terminus, the 525-residue chain is uncharacterized protein (525 aa).

The N-terminal stretch at M1–A21 is a signal peptide. Over A22–R448 the chain is Extracellular. Residues K242–T264 are disordered. Residues I449–Y469 form a helical membrane-spanning segment. Residues R470–E525 are Cytoplasmic-facing.

The protein resides in the membrane. This is an uncharacterized protein from Saccharomyces cerevisiae (strain YJM789) (Baker's yeast).